Here is a 499-residue protein sequence, read N- to C-terminus: MEKYILSIDQGTTSSRAILFNKEGEIKGVSQREFKQHFPHPGWVEHDANEIWTSVLSVMAELLNENNINANQIEGIGITNQRETTVVWDKNTGRPIYHAIVWQSRQTQDICTNLKEQGYEETFREKTGLLLDPYFAGTKVKWILDHVEGAREKAENGDLLFGTIDSWLVWKLSGRTAHITDYTNASRTLMFNIYDLKWDDELLELLNIPKQMLPEVKESSEIYGKTIDYHFFGQEVPIAGIAGDQQAALFGQACFDRGDVKNTYGTGGFMLMNTGEEAVKSESGLLTTIAYGLDGKVNYALEGSIFVSGSAIQWLRDGLRMINSAPQTENYASRVESTEGVYMVPAFVGLGTPYWDSEARGAIFGLSRGTEKEHFIRATLESLCYQTRDVMEAMSKDSGIEVQNLRVDGGAVKNNFIMQFQADIVNSSVERPEIQETTALGAAYLAGLAVGFWDDKEDIRERWKLQTEFKPEMDEDQRHKLYSGWKKAVKATQVFKLED.

Position 12 (Thr12) interacts with ADP. Residues Thr12, Thr13, and Ser14 each coordinate ATP. Residue Thr12 participates in sn-glycerol 3-phosphate binding. Arg16 contacts ADP. The sn-glycerol 3-phosphate site is built by Arg82, Glu83, and Tyr134. Glycerol is bound by residues Arg82, Glu83, and Tyr134. His230 bears the Phosphohistidine; by HPr mark. Asp244 serves as a coordination point for sn-glycerol 3-phosphate. Glycerol is bound by residues Asp244 and Gln245. Thr266 and Gly309 together coordinate ADP. Residues Thr266, Gly309, Gln313, and Gly410 each contribute to the ATP site. Residues Gly410 and Asn414 each coordinate ADP.

It belongs to the FGGY kinase family. Homotetramer and homodimer (in equilibrium). In terms of processing, the phosphoenolpyruvate-dependent sugar phosphotransferase system (PTS), including enzyme I, and histidine-containing protein (HPr) are required for the phosphorylation, which leads to the activation of the enzyme.

It catalyses the reaction glycerol + ATP = sn-glycerol 3-phosphate + ADP + H(+). Its pathway is polyol metabolism; glycerol degradation via glycerol kinase pathway; sn-glycerol 3-phosphate from glycerol: step 1/1. Its activity is regulated as follows. Activated by phosphorylation and inhibited by fructose 1,6-bisphosphate (FBP). In terms of biological role, key enzyme in the regulation of glycerol uptake and metabolism. Catalyzes the phosphorylation of glycerol to yield sn-glycerol 3-phosphate. In Staphylococcus epidermidis (strain ATCC 12228 / FDA PCI 1200), this protein is Glycerol kinase.